The chain runs to 2925 residues: Otogelin (2925 aa).

The N-terminal stretch at 1-25 (MGVLASALCWLLCVWLPWGEQAAES) is a signal peptide. A disordered region spans residues 39-69 (GRSGARGMRNVKGMRNGPAQTRVSSSSSHQE). Positions 56 to 69 (PAQTRVSSSSSHQE) are enriched in polar residues. Positions 102 to 139 (HRAKCAPSYLFSCFNGGECVHPAFCDCRRFNATGPRCQ) constitute an EGF-like domain. 5 cysteine pairs are disulfide-bonded: Cys106/Cys120, Cys114/Cys126, Cys128/Cys138, Cys152/Cys285, and Cys199/Cys206. The region spanning 150–322 (SICRAWGQHH…SWQEQAPNQP (173 aa)) is the VWFD 1 domain. The segment at 316–335 (EQAPNQPPGPTTSSLPRPPC) is disordered. Polar residues predominate over residues 326–335 (TTSSLPRPPC). The VWFD 2 domain maps to 512–688 (AECSVTGDIH…NSWKTLSACS (177 aa)). 3 cysteine pairs are disulfide-bonded: Cys514–Cys652, Cys536–Cys687, and Cys558–Cys566. The TIL domain maps to 780–844 (CEASKEYSPC…ADLCVPRNQC (65 aa)). The N-linked (GlcNAc...) asparagine glycan is linked to Asn914. Residues 984–1152 (STCTAYGDRH…SWAAVECPDT (169 aa)) enclose the VWFD 3 domain. 2 cysteine pairs are disulfide-bonded: Cys986/Cys1115 and Cys1030/Cys1037. Residues 1476-1540 (LGNETLPPSQ…PVVSPGPTQT (65 aa)) form a disordered region. The N-linked (GlcNAc...) asparagine glycan is linked to Asn1478. A compositionally biased stretch (low complexity) spans 1502-1528 (PRTPTHRPALTPAAPLTTALNPPVTAT). An N-linked (GlcNAc...) asparagine glycan is attached at Asn1612. Disordered regions lie at residues 1636–1679 (GHGS…HKAV), 1693–1715 (VPQP…AGTA), and 1737–1788 (KGEA…ASLS). Polar residues predominate over residues 1650–1659 (SLTASPSSRP). Over residues 1694–1708 (PQPTQAQSASSPSTP) the composition is skewed to low complexity. Residues 1751-1764 (SPQPHPLPSAPPRP) show a composition bias toward pro residues. Residues 2110–2289 (CRCSIFPDLS…SWQVPSSLTS (180 aa)) enclose the VWFD 4 domain. 5 disulfides stabilise this stretch: Cys2112–Cys2249, Cys2840–Cys2889, Cys2854–Cys2903, Cys2865–Cys2920, and Cys2869–Cys2922. A CTCK domain is found at 2840-2925 (CKKVTIRMTI…EPTDCACQWS (86 aa)).

The protein belongs to the otogelin family. In terms of processing, N-glycosylated. Not O-glycosylated.

The protein localises to the apical cell membrane. It localises to the secreted. Its subcellular location is the extracellular space. Its function is as follows. Glycoprotein specific to acellular membranes of the inner ear. May be required for the anchoring of the otoconial membranes and cupulae to the underlying neuroepithelia in the vestibule. May be involved in the organization and/or stabilization of the fibrillar network that compose the tectorial membrane in the cochlea. May play a role in mechanotransduction processes. This Homo sapiens (Human) protein is Otogelin (OTOG).